Reading from the N-terminus, the 91-residue chain is Acylphosphatase (91 aa).

The Acylphosphatase-like domain maps to 6-91; that stretch reads CMRCYISGRV…WEDYITFDVL (86 aa). Catalysis depends on residues R21 and N39.

This sequence belongs to the acylphosphatase family.

It carries out the reaction an acyl phosphate + H2O = a carboxylate + phosphate + H(+). This Legionella pneumophila (strain Lens) protein is Acylphosphatase (acyP).